Here is a 173-residue protein sequence, read N- to C-terminus: MFKKLFGLDKKAKNEAASPQEELIYAPLNGTLVDIEDVPDPTFAQKMMGDGFAIDPRDGHVVAPVAGEIVQVFPTKHAVGIKTPGGAELLIHIGLETVNMKGEGFTAHVKEGDKVNVGDALVDFDLELVKEKAESTVTPVVVTNIDQLAVFEKQAATETKAGETSLVTIKVQG.

The PTS EIIA type-1 domain maps to 40-144 (DPTFAQKMMG…STVTPVVVTN (105 aa)). Zn(2+) contacts are provided by His-77 and His-92. His-92 (tele-phosphohistidine intermediate; for EIIA activity) is an active-site residue. His-92 is subject to Phosphohistidine; by HPr.

As to quaternary structure, heterodimer with glycerol kinase (glpk). Requires Zn(2+) as cofactor.

The protein resides in the cytoplasm. The phosphoenolpyruvate-dependent sugar phosphotransferase system (sugar PTS), a major carbohydrate active transport system, catalyzes the phosphorylation of incoming sugar substrates concomitantly with their translocation across the cell membrane. The enzyme II complex composed of PtsG and Crr is involved in glucose transport. The polypeptide is PTS system glucose-specific EIIA component (crr) (Halalkalibacterium halodurans (strain ATCC BAA-125 / DSM 18197 / FERM 7344 / JCM 9153 / C-125) (Bacillus halodurans)).